Consider the following 229-residue polypeptide: Uridylate kinase (229 aa).

11-12 (GS) serves as a coordination point for ATP. Gly-45 provides a ligand contact to UMP. ATP is bound by residues Gly-46 and Arg-50. UMP is bound by residues Asp-67 and 114-120 (TEPGHTT). The ATP site is built by Thr-140, Tyr-146, and Asp-149.

The protein belongs to the UMP kinase family. In terms of assembly, homohexamer.

The protein localises to the cytoplasm. It carries out the reaction UMP + ATP = UDP + ADP. It functions in the pathway pyrimidine metabolism; CTP biosynthesis via de novo pathway; UDP from UMP (UMPK route): step 1/1. Inhibited by UTP. Catalyzes the reversible phosphorylation of UMP to UDP. The sequence is that of Uridylate kinase from Thermoplasma acidophilum (strain ATCC 25905 / DSM 1728 / JCM 9062 / NBRC 15155 / AMRC-C165).